The sequence spans 145 residues: Ribonuclease HI (145 aa).

The RNase H type-1 domain occupies 1-142; sequence MNQTVYLYTD…ADDLANRGAA (142 aa). Residues Asp10, Glu48, Asp70, and Asp134 each coordinate Mg(2+).

It belongs to the RNase H family. In terms of assembly, monomer. Mg(2+) is required as a cofactor.

The protein resides in the cytoplasm. The catalysed reaction is Endonucleolytic cleavage to 5'-phosphomonoester.. Endonuclease that specifically degrades the RNA of RNA-DNA hybrids. The sequence is that of Ribonuclease HI from Neisseria meningitidis serogroup B (strain ATCC BAA-335 / MC58).